The primary structure comprises 1833 residues: Proteasome activator complex subunit 4A (1833 aa).

2 HEAT repeats span residues 460–504 (PEGP…LVDC) and 983–1022 (NFCCRDIIPVVLKYLDPERTDVTQQQFKGALYCLLGNHSG). The disordered stretch occupies residues 1095–1122 (SSSPEPNPGAASEQEELEGRKREEQKNK). Residues 1111–1122 (LEGRKREEQKNK) show a composition bias toward basic and acidic residues. HEAT repeat units lie at residues 1164–1202 (LPLPSSAVLFFVESLNHDSLLVRNVAISAVAGILKQLKR), 1344–1382 (DAFLPLLKPHMERLVADSHESPQRCVAEIISGLIRGSKH), 1626–1664 (SDQIPQVLSALEEISRSSSWHARYTILTYLQIMVFYNLF), and 1670–1708 (AKAVCDVRALVLRLLEDEQLEVREMAATTLSGFLQCNFL). The tract at residues 1640–1728 (SRSSSWHARY…ESLSKTRLPK (89 aa)) is bromodomain-like (BRDL).

The protein belongs to the BLM10 family. In terms of assembly, homodimer. Interacts with the 20S and 26S proteasomes.

The protein resides in the cytoplasm. Its subcellular location is the cytosol. It is found in the nucleus. The protein localises to the nucleus speckle. Associated component of the proteasome that specifically recognizes acetylated histones and promotes ATP- and ubiquitin-independent degradation of core histones during DNA damage response. Recognizes and binds acetylated histones via its bromodomain-like (BRDL) region and activates the proteasome by opening the gated channel for substrate entry. Binds to the core proteasome via its C-terminus, which occupies the same binding sites as the proteasomal ATPases, opening the closed structure of the proteasome via an active gating mechanism. involved in DNA damage response in somatic cells: binds to acetylated histones and promotes degradation of histones. This Danio rerio (Zebrafish) protein is Proteasome activator complex subunit 4A (psme4a).